Consider the following 361-residue polypeptide: RLA class I histocompatibility antigen, alpha chain 11/11 (361 aa).

A signal peptide spans 1-24; the sequence is MGSMAPRTLLLLLAGALTLKDTQA. The alpha-1 stretch occupies residues 25–114; that stretch reads GSHSMRYFYT…ALRYYNQSAA (90 aa). The Extracellular segment spans residues 25-308; sequence GSHSMRYFYT…EPPAQPTALI (284 aa). The N-linked (GlcNAc...) asparagine glycan is linked to N110. The interval 115-206 is alpha-2; the sequence is GSHTFQTMFG…EMGKETLQRA (92 aa). 2 disulfides stabilise this stretch: C125–C188 and C227–C283. The tract at residues 207-298 is alpha-3; that stretch reads DPPKAHVTHH…GLPEPLTLTW (92 aa). The region spanning 209–297 is the Ig-like C1-type domain; that stretch reads PKAHVTHHPA…EGLPEPLTLT (89 aa). Positions 299-308 are connecting peptide; it reads EPPAQPTALI. Residues 309-329 form a helical membrane-spanning segment; sequence VGIVAGVLGVLLILGAVVAVV. Over 330-361 the chain is Cytoplasmic; the sequence is RRKKHSSDGKGGRYTPAAGGHRDQGSDDSLMP. Positions 335–361 are disordered; it reads SSDGKGGRYTPAAGGHRDQGSDDSLMP. 2 positions are modified to phosphoserine: S355 and S358.

The protein belongs to the MHC class I family. As to quaternary structure, heterodimer of an alpha chain and a beta chain (beta-2-microglobulin).

The protein resides in the membrane. In terms of biological role, involved in the presentation of foreign antigens to the immune system. The polypeptide is RLA class I histocompatibility antigen, alpha chain 11/11 (Oryctolagus cuniculus (Rabbit)).